Reading from the N-terminus, the 224-residue chain is Endonuclease NucS (224 aa).

This sequence belongs to the NucS endonuclease family.

It localises to the cytoplasm. In terms of biological role, cleaves both 3' and 5' ssDNA extremities of branched DNA structures. In Rhodococcus jostii (strain RHA1), this protein is Endonuclease NucS.